A 127-amino-acid polypeptide reads, in one-letter code: Thioredoxin-3, mitochondrial (127 aa).

The N-terminal 21 residues, 1 to 21 (MLFYKPVMRMAVRPLKSIRFQ), are a transit peptide targeting the mitochondrion. The Thioredoxin domain maps to 22–127 (SSYTSITKLT…TALEKGIKDL (106 aa)). Residues Cys-55 and Cys-58 each act as nucleophile in the active site. The cysteines at positions 55 and 58 are disulfide-linked.

Belongs to the thioredoxin family.

It localises to the mitochondrion. The sequence is that of Thioredoxin-3, mitochondrial (TRX3) from Saccharomyces cerevisiae (strain ATCC 204508 / S288c) (Baker's yeast).